A 200-amino-acid polypeptide reads, in one-letter code: LexA repressor (200 aa).

A DNA-binding region (H-T-H motif) is located at residues 27 to 47; sequence VREICNAVELRSTSTVHGHLK. Catalysis depends on for autocatalytic cleavage activity residues Ser-124 and Lys-161.

The protein belongs to the peptidase S24 family. As to quaternary structure, homodimer.

The enzyme catalyses Hydrolysis of Ala-|-Gly bond in repressor LexA.. In terms of biological role, represses a number of genes involved in the response to DNA damage (SOS response), including recA and lexA. In the presence of single-stranded DNA, RecA interacts with LexA causing an autocatalytic cleavage which disrupts the DNA-binding part of LexA, leading to derepression of the SOS regulon and eventually DNA repair. The chain is LexA repressor from Clostridium tetani (strain Massachusetts / E88).